Consider the following 348-residue polypeptide: MSHLVGLVRAVQANYYRVRLREPSNGVEELLCVRRARLKKMGQQVCVGDWVVVSHPDWPGQRGAIAEILPRRNQLSRPAIANVDQILLLFALADPPADVHPITRFLLTAEGLNVEIQVVFTKADLVSPQEQQQWRDRLQQWGYRCHVLSLTQGIAWQALRPHLANKITVVCGPSGVGKSSLIRHLTPREDIRVGAVSDHWHRGRHTTRHVELFPLAEGGWIADTPGFNQPELPPDPRQLAAAFPEIRQRLSQDQCLFDNCRHDQEPGCCVRGNWERYPLYIEYLHQLETIASAEPSLAKVPLVKAKSDRQGQQRLEPLLDAKKYRRRSRRQQHQHVNPMAEEVLDSEW.

In terms of domain architecture, CP-type G spans Arg-72–Pro-230. GTP is bound by residues Thr-121–Asp-124 and Gly-172–Ser-180. Zn(2+) is bound by residues Cys-255, Cys-260, His-262, and Cys-268. Over residues Ala-305 to Lys-322 the composition is skewed to basic and acidic residues. Positions Ala-305–Trp-348 are disordered. The span at Lys-323–His-333 shows a compositional bias: basic residues.

Belongs to the TRAFAC class YlqF/YawG GTPase family. RsgA subfamily. Monomer. Associates with 30S ribosomal subunit, binds 16S rRNA. It depends on Zn(2+) as a cofactor.

The protein localises to the cytoplasm. Its function is as follows. One of several proteins that assist in the late maturation steps of the functional core of the 30S ribosomal subunit. Helps release RbfA from mature subunits. May play a role in the assembly of ribosomal proteins into the subunit. Circularly permuted GTPase that catalyzes slow GTP hydrolysis, GTPase activity is stimulated by the 30S ribosomal subunit. This Thermosynechococcus vestitus (strain NIES-2133 / IAM M-273 / BP-1) protein is Small ribosomal subunit biogenesis GTPase RsgA.